Here is a 146-residue protein sequence, read N- to C-terminus: Putative inactive cytochrome P450 2G1 (146 aa).

C91 lines the heme pocket.

Belongs to the cytochrome P450 family. The cofactor is heme.

This is Putative inactive cytochrome P450 2G1 (CYP2G1P) from Homo sapiens (Human).